A 471-amino-acid polypeptide reads, in one-letter code: MGFLWTGTWIVVLMLHSSPIQAFPKPAGSQDKPLHNRELSAERPLNEQIAEAEADEIKKTYPPENKPGESNYSFVDNLNLLKAITEKEKNEKERQSVKISPNDNKLNVEDVDSTKNRRLIDDYDSTKSGLDRKFQDDPDGLHQLDGTPLTAEDIVQKIATRIYEENDRGVFDRIVSKLLNLGLITESQAHTLEDEVAEVLQKLISKEANNYEEELNKPTSKTESQTGKIPEKVTPMAAIQDAFTNGENDETVSNTLTLTNGLERRTKTYSEDNFEELQYFPNFYALLKSIDSEKEAKEKETLITIMKTLIDFVKMMVKYGTISPEEGVSYLENLDETIALQTKNKLEKNVTDNKSKLFAVPSEKSHEETDSTKEEAAKMEKEYGTLKDSTKDDDSNPRGKTDEHKGKTEAYLEAIRKNIDWLKKHNKKENKEDYDLSKMRDFINQQADAYVEKGILDKEEADAIKRIYSSL.

Positions 1–22 (MGFLWTGTWIVVLMLHSSPIQA) are cleaved as a signal peptide. Disordered regions lie at residues 23–72 (FPKP…ESNY) and 86–105 (EKEKNEKERQSVKISPNDNK). The segment covering 32-45 (KPLHNRELSAERPL) has biased composition (basic and acidic residues). A Phosphoserine modification is found at Ser-40. Residue Ser-40 is glycosylated (O-linked (Xyl...) (chondroitin sulfate) serine). N-linked (GlcNAc...) asparagine glycosylation is present at Asn-71. The segment covering 86–96 (EKEKNEKERQS) has biased composition (basic and acidic residues). N-linked (GlcNAc...) asparagine glycosylation is present at Asn-353. The tract at residues 357 to 409 (LFAVPSEKSHEETDSTKEEAAKMEKEYGTLKDSTKDDDSNPRGKTDEHKGKTE) is disordered. A compositionally biased stretch (basic and acidic residues) spans 363 to 409 (EKSHEETDSTKEEAAKMEKEYGTLKDSTKDDDSNPRGKTDEHKGKTE). A Phosphoserine modification is found at Ser-365.

In terms of assembly, interacts with CHGA. Interacts with secretogranin II/SCG2. Interacts (via C-terminus) with CPE.

The protein localises to the cytoplasmic vesicle. It localises to the secretory vesicle. The protein resides in the secretory vesicle membrane. It is found in the secreted. Its function is as follows. Member of the granin protein family that regulates the biogenesis of secretory granules. Acts as a sorting receptor for intragranular proteins including chromogranin A/CHGA. May also play a role in angiogenesis. Promotes endothelial proliferation, migration and tube formation through MEK/ERK signaling pathway. The polypeptide is Secretogranin-3 (SCG3) (Bos taurus (Bovine)).